Here is a 419-residue protein sequence, read N- to C-terminus: Histidine--tRNA ligase (419 aa).

Belongs to the class-II aminoacyl-tRNA synthetase family. As to quaternary structure, homodimer.

The protein resides in the cytoplasm. The catalysed reaction is tRNA(His) + L-histidine + ATP = L-histidyl-tRNA(His) + AMP + diphosphate + H(+). The protein is Histidine--tRNA ligase of Syntrophotalea carbinolica (strain DSM 2380 / NBRC 103641 / GraBd1) (Pelobacter carbinolicus).